A 1032-amino-acid chain; its full sequence is Toll-like receptor 9 (1032 aa).

Residues 1-25 (MGPCRGALHPLSLLVQAAALALALA) form the signal peptide. At 26–815 (QGTLPAFLPC…QDLRLCLDEA (790 aa)) the chain is on the extracellular side. A disulfide bond links Cys-35 and Cys-45. A DNA-binding site is contributed by 47–51 (WLFLK). 26 LRR repeats span residues 62-85 (RGNVTSLSLYSNRIHHLHDYDFVH), 87-110 (VHLRRLNLKWNCPPASLSPMHFPC), 122-147 (VPTLEDLNLSYNSITTVPALPSSLVS), 150-166 (LSRTNILVLDPATLAGL), 167-190 (YALRFLFLDGNCYYKNPCQQALQV), 198-221 (LGNLTHLSLKYNNLTVVPRGLPPS), 223-242 (EYLLLSYNHIITLAPEDLAN), 243-268 (LTALRVLDVGGNCRRCDHARNPCREC), 283-306 (LSHLEGLVLRDSSLYSLDPRWFHG), 308-332 (GNLMVLDLSENFLYDCITKTKAFYG), 333-356 (LARLRRLNLSFNYHKKVSFAHLHL), 363-386 (LLSLQELDIHGIFFRSLSKTTLQS), 390-413 (LPMLQRLHLQLNFISQAQLSIFGA), 415-440 (PGLRYVDLSDNRISGAAEPAAATGEV), 472-496 (CRTLNFTLDLSRNNLVTVQPEMFVR), 498-521 (ARLQCLGLSHNSISQAVNGSQFVP), 522-545 (LSNLRVLDLSHNKLDLYHGRSFTE), 547-574 (PRLEALDLSYNSQPFSMRGVGHNLSFVA), 576-600 (LPALRYLSLAHNGIHSRVSQQLRSA), 602-624 (LRALDFSGNTLSQMWAEGDLYLR), 629-652 (LRSLVQLDLSQNRLHTLLPRNLDN), 654-677 (PKSLRLLRLRDNYLAFFNWSSLAL), 678-701 (LPKLEALDLAGNQLKALSNGSLPN), 703-725 (TQLQRLDLSGNSIGFVVPSFFAL), 726-749 (AVRLRELNLSANALKTVEPSWFGS), and 751-774 (AGALKVLDVTANPLHCACGATFVD). A glycan (N-linked (GlcNAc...) asparagine) is linked at Asn-64. Residues 72–77 (SNRIHH) and 95–109 (KWNCPPASLSPMHFP) each bind DNA. The cysteines at positions 98 and 110 are disulfide-linked. Asn-129 carries N-linked (GlcNAc...) asparagine glycosylation. DNA-binding positions include Tyr-132, Arg-152, and 179-181 (YYK). The cysteines at positions 178 and 184 are disulfide-linked. Asn-200 carries an N-linked (GlcNAc...) asparagine glycan. DNA is bound at residue Tyr-208. N-linked (GlcNAc...) asparagine glycosylation is found at Asn-210 and Asn-242. 2 cysteine pairs are disulfide-bonded: Cys-255-Cys-268 and Cys-258-Cys-265. The S-palmitoyl cysteine moiety is linked to residue Cys-258. Arg-262 contributes to the DNA binding site. Residue Cys-265 is the site of S-palmitoyl cysteine attachment. A glycan (N-linked (GlcNAc...) asparagine) is linked at Asn-340. A disulfide bridge connects residues Cys-472 and Cys-502. Asn-476 and Asn-515 each carry an N-linked (GlcNAc...) asparagine glycan. Residue Asn-569 is glycosylated (N-linked (GlcNAc...) asparagine). N-linked (GlcNAc...) asparagine glycosylation is found at Asn-671, Asn-696, and Asn-701. Residue Asn-733 is glycosylated (N-linked (GlcNAc...) asparagine). 2 disulfide bridges follow: Cys-766–Cys-792 and Cys-768–Cys-811. The chain crosses the membrane as a helical span at residues 816 to 836 (LSWVCFSLSLLAVALSLAVPM). Residues 837–1032 (LHQLCGWDLW…QNFCRGPTTA (196 aa)) are Cytoplasmic-facing. In terms of domain architecture, TIR spans 868 to 1013 (LAYDAFVVFD…SFWAQLGTAL (146 aa)).

This sequence belongs to the Toll-like receptor family. As to quaternary structure, monomer and homodimer. Exists as a monomer in the absence of unmethylated cytidine-phosphate-guanosine (CpG) ligand. Proteolytic processing of an insertion loop (Z-loop) is required for homodimerization upon binding to the unmethylated CpG ligand leading to its activation. Interacts with MYD88 via their respective TIR domains. Interacts with BTK. Interacts (via transmembrane domain) with UNC93B1. Interacts with CD300LH; the interaction may promote full activation of TLR9-triggered innate responses. Interacts with CNPY3 and HSP90B1; this interaction is required for proper folding in the endoplasmic reticulum. Interacts with SMPDL3B. Interacts with CD82; this interaction is essential for TLR9-dependent myddosome formation in response to CpG stimulation. In terms of processing, activated by proteolytic cleavage of the flexible loop between repeats LRR14 and LRR15 within the ectodomain. Cleavage requires UNC93B1. Proteolytically processed by first removing the majority of the ectodomain by either asparagine endopeptidase (AEP) or a cathepsin followed by a trimming event that is solely cathepsin mediated and required for optimal receptor signaling. Palmitoylated by ZDHHC3 in the Golgi regulates TLR9 trafficking from the Golgi to endosomes. Depalmitoylation by PPT1 controls the release of TLR9 from UNC93B1 in endosomes.

Its subcellular location is the endoplasmic reticulum membrane. It is found in the endosome. It localises to the lysosome. The protein localises to the cytoplasmic vesicle. The protein resides in the phagosome. Key component of innate and adaptive immunity. TLRs (Toll-like receptors) control host immune response against pathogens through recognition of molecular patterns specific to microorganisms. TLR9 is a nucleotide-sensing TLR which is activated by unmethylated cytidine-phosphate-guanosine (CpG) dinucleotides. Acts via MYD88 and TRAF6, leading to NF-kappa-B activation, cytokine secretion and the inflammatory response. Upon CpG stimulation, induces B-cell proliferation, activation, survival and antibody production. This Canis lupus familiaris (Dog) protein is Toll-like receptor 9 (TLR9).